Reading from the N-terminus, the 125-residue chain is Dirigent protein 22 (125 aa).

Asn8, Asn30, and Asn65 each carry an N-linked (GlcNAc...) asparagine glycan.

The protein belongs to the plant dirigent protein family. In terms of assembly, homodimer.

The protein resides in the secreted. The protein localises to the extracellular space. It is found in the apoplast. In terms of biological role, dirigent proteins impart stereoselectivity on the phenoxy radical-coupling reaction, yielding optically active lignans from two molecules of coniferyl alcohol in the biosynthesis of lignans, flavonolignans, and alkaloids and thus plays a central role in plant secondary metabolism. This chain is Dirigent protein 22 (DIR22), found in Arabidopsis thaliana (Mouse-ear cress).